Reading from the N-terminus, the 382-residue chain is MKALHFGAGNIGRGFIGKLLADAGIQLTFADVNQVVLDALNARHSYQVHVVGENEQVDTVSGVNAVSSIGDDVVDLIAHVDLITTAVGPVVLERIAPAIAKGLVKRKAQGVDAPLNIIACENMVRGTTQLKGHVMNALADGDKAWVEQHVGFVDSAVDRIVPPSASATNDPLEVTVETFSEWIVDKTQFKGTLPNIPGMELTDNLMAFVERKLFTLNTGHAITAYLGKLAGHQTIRDAILDESIRAVVKGAMEESGAVLIKRYGFDADKHAAYIQKILGRFENPYLKDDVERVGRQPLRKLSAGDRLIKPLLGTLEYGLPHVNLVKGIAAAMHFRSDEDPQAQELAALITEKGPQAALAQISGLDANSDVVAEAVNAYNATK.

3-14 (ALHFGAGNIGRG) provides a ligand contact to NAD(+).

Belongs to the mannitol dehydrogenase family.

The catalysed reaction is D-mannitol 1-phosphate + NAD(+) = beta-D-fructose 6-phosphate + NADH + H(+). This Salmonella agona (strain SL483) protein is Mannitol-1-phosphate 5-dehydrogenase.